Consider the following 85-residue polypeptide: MQSAMKLFFIFLIFVFSVSCGPSAPQMKTRDVLERTHKCFLVGGECKSECSSWEYEYVFCYTGPCCVMREYKRVEKFSNTPKYTT.

The first 23 residues, 1-23 (MQSAMKLFFIFLIFVFSVSCGPS), serve as a signal peptide directing secretion. 3 disulfide bridges follow: Cys39/Cys65, Cys46/Cys60, and Cys50/Cys66.

This sequence belongs to the beta-defensin family.

The protein localises to the secreted. Functionally, has antibacterial activity. The polypeptide is Beta-defensin 18 (Defb18) (Rattus norvegicus (Rat)).